We begin with the raw amino-acid sequence, 95 residues long: Protein RnfH (95 aa).

Belongs to the UPF0125 (RnfH) family.

This Methylococcus capsulatus (strain ATCC 33009 / NCIMB 11132 / Bath) protein is Protein RnfH.